Here is a 104-residue protein sequence, read N- to C-terminus: Large ribosomal subunit protein uL24 (104 aa).

Belongs to the universal ribosomal protein uL24 family. Part of the 50S ribosomal subunit.

One of two assembly initiator proteins, it binds directly to the 5'-end of the 23S rRNA, where it nucleates assembly of the 50S subunit. Functionally, one of the proteins that surrounds the polypeptide exit tunnel on the outside of the subunit. The protein is Large ribosomal subunit protein uL24 of Shewanella denitrificans (strain OS217 / ATCC BAA-1090 / DSM 15013).